The sequence spans 83 residues: Small ribosomal subunit protein bS20 (83 aa).

It belongs to the bacterial ribosomal protein bS20 family.

Its function is as follows. Binds directly to 16S ribosomal RNA. This is Small ribosomal subunit protein bS20 from Amoebophilus asiaticus (strain 5a2).